A 187-amino-acid polypeptide reads, in one-letter code: Hypoxanthine/guanine phosphoribosyltransferase (187 aa).

Belongs to the purine/pyrimidine phosphoribosyltransferase family. Archaeal HPRT subfamily. Homodimer.

It is found in the cytoplasm. The catalysed reaction is IMP + diphosphate = hypoxanthine + 5-phospho-alpha-D-ribose 1-diphosphate. It catalyses the reaction GMP + diphosphate = guanine + 5-phospho-alpha-D-ribose 1-diphosphate. Its pathway is purine metabolism; IMP biosynthesis via salvage pathway; IMP from hypoxanthine: step 1/1. In terms of biological role, catalyzes a salvage reaction resulting in the formation of IMP that is energically less costly than de novo synthesis. The sequence is that of Hypoxanthine/guanine phosphoribosyltransferase from Methanococcus voltae (strain ATCC BAA-1334 / A3).